Here is a 206-residue protein sequence, read N- to C-terminus: MDCGLYIITDEILAPGCSHIQIAKESLSGGAKIIQLRDKRRNAAELYAIAQEIRSLCTQHHARFIVNDRLDIALAVQADGVHLGQDDLPLSAARLLAPRPFIIGVSVGTVEEAVLAEKGGADYLGVGPVYPTGTKADAGPAVGPGLIRSIRERVAIPIIAIGGINLTNAGDVLAAGADGIAVISAVICSPDIAAASRKFADLMIHS.

4-amino-2-methyl-5-(diphosphooxymethyl)pyrimidine contacts are provided by residues 35–39 and N67; that span reads QLRDK. Mg(2+) is bound by residues D68 and D87. S106 is a 4-amino-2-methyl-5-(diphosphooxymethyl)pyrimidine binding site. Residue 132 to 134 coordinates 2-[(2R,5Z)-2-carboxy-4-methylthiazol-5(2H)-ylidene]ethyl phosphate; that stretch reads TGT. K135 is a binding site for 4-amino-2-methyl-5-(diphosphooxymethyl)pyrimidine. 2-[(2R,5Z)-2-carboxy-4-methylthiazol-5(2H)-ylidene]ethyl phosphate-binding positions include G163 and 183-184; that span reads IS.

The protein belongs to the thiamine-phosphate synthase family. It depends on Mg(2+) as a cofactor.

It catalyses the reaction 2-[(2R,5Z)-2-carboxy-4-methylthiazol-5(2H)-ylidene]ethyl phosphate + 4-amino-2-methyl-5-(diphosphooxymethyl)pyrimidine + 2 H(+) = thiamine phosphate + CO2 + diphosphate. The enzyme catalyses 2-(2-carboxy-4-methylthiazol-5-yl)ethyl phosphate + 4-amino-2-methyl-5-(diphosphooxymethyl)pyrimidine + 2 H(+) = thiamine phosphate + CO2 + diphosphate. It carries out the reaction 4-methyl-5-(2-phosphooxyethyl)-thiazole + 4-amino-2-methyl-5-(diphosphooxymethyl)pyrimidine + H(+) = thiamine phosphate + diphosphate. Its pathway is cofactor biosynthesis; thiamine diphosphate biosynthesis; thiamine phosphate from 4-amino-2-methyl-5-diphosphomethylpyrimidine and 4-methyl-5-(2-phosphoethyl)-thiazole: step 1/1. Its function is as follows. Condenses 4-methyl-5-(beta-hydroxyethyl)thiazole monophosphate (THZ-P) and 2-methyl-4-amino-5-hydroxymethyl pyrimidine pyrophosphate (HMP-PP) to form thiamine monophosphate (TMP). This chain is Thiamine-phosphate synthase, found in Methanospirillum hungatei JF-1 (strain ATCC 27890 / DSM 864 / NBRC 100397 / JF-1).